Here is a 297-residue protein sequence, read N- to C-terminus: Ribosomal RNA small subunit methyltransferase A (297 aa).

6 residues coordinate S-adenosyl-L-methionine: Asn-31, Leu-33, Gly-58, Glu-79, Asp-104, and Asn-129.

Belongs to the class I-like SAM-binding methyltransferase superfamily. rRNA adenine N(6)-methyltransferase family. RsmA subfamily.

It is found in the cytoplasm. It carries out the reaction adenosine(1518)/adenosine(1519) in 16S rRNA + 4 S-adenosyl-L-methionine = N(6)-dimethyladenosine(1518)/N(6)-dimethyladenosine(1519) in 16S rRNA + 4 S-adenosyl-L-homocysteine + 4 H(+). Specifically dimethylates two adjacent adenosines (A1518 and A1519) in the loop of a conserved hairpin near the 3'-end of 16S rRNA in the 30S particle. May play a critical role in biogenesis of 30S subunits. This Staphylococcus aureus (strain MRSA252) protein is Ribosomal RNA small subunit methyltransferase A.